The chain runs to 704 residues: Elongation factor G (704 aa).

Residues 10–290 (NKVRNIGIMA…AVVDFLPNPL (281 aa)) enclose the tr-type G domain. GTP-binding positions include 19–26 (AHIDAGKT), 83–87 (DTPGH), and 137–140 (NKMD).

This sequence belongs to the TRAFAC class translation factor GTPase superfamily. Classic translation factor GTPase family. EF-G/EF-2 subfamily.

The protein localises to the cytoplasm. Its function is as follows. Catalyzes the GTP-dependent ribosomal translocation step during translation elongation. During this step, the ribosome changes from the pre-translocational (PRE) to the post-translocational (POST) state as the newly formed A-site-bound peptidyl-tRNA and P-site-bound deacylated tRNA move to the P and E sites, respectively. Catalyzes the coordinated movement of the two tRNA molecules, the mRNA and conformational changes in the ribosome. This chain is Elongation factor G, found in Paenarthrobacter aurescens (strain TC1).